A 466-amino-acid chain; its full sequence is 55 kDa erythrocyte membrane protein (466 aa).

T2 is modified (N-acetylthreonine). Phosphoserine occurs at positions 13 and 19. Residue T49 is modified to Phosphothreonine. S52, S57, and S110 each carry phosphoserine. In terms of domain architecture, PDZ spans 71–152 (LIQFEKVTEE…MISLKVIPNQ (82 aa)). Positions 158–228 (ALQMFMRAQF…PSPELQEWRV (71 aa)) constitute an SH3 domain. S243 is modified (phosphoserine). The segment at 268 to 466 (VVSYEEVVRL…PQWVPVSWVY (199 aa)) is interaction with PALS1. The 170-residue stretch at 282 to 451 (RKTLVLIGAS…TLKKLQEAFD (170 aa)) folds into the Guanylate kinase-like domain.

The protein belongs to the MAGUK family. Heterodimer with PALS1. Interacts with DLG5 and NF2. Interacts (via guanylate kinase-like domain) with WHRN (via third PDZ domain). Palmitoylated.

The protein resides in the cell membrane. It localises to the cell projection. The protein localises to the stereocilium. Functionally, essential regulator of neutrophil polarity. Regulates neutrophil polarization by regulating AKT1 phosphorylation through a mechanism that is independent of PIK3CG activity. This is 55 kDa erythrocyte membrane protein (MPP1) from Pongo abelii (Sumatran orangutan).